We begin with the raw amino-acid sequence, 143 residues long: MDQTLSSFGNVFAFLALGIVFVAGGYLTARMLRPSRPNPAKNSTYECGEEAVGSAWVKFNIRFYVVALIFIIFDVEVVFLYPWATVFKSLGVFALVEVLVFAGILILGLVYAWVKGDLDWVRPEPKVPQMPVMPDRKAEGGRA.

A run of 3 helical transmembrane segments spans residues 8-28 (FGNV…GYLT), 63-83 (FYVV…LYPW), and 90-110 (LGVF…LGLV).

It belongs to the complex I subunit 3 family. In terms of assembly, NDH-1 is composed of 14 different subunits. Subunits NuoA, H, J, K, L, M, N constitute the membrane sector of the complex.

Its subcellular location is the cell inner membrane. The enzyme catalyses a quinone + NADH + 5 H(+)(in) = a quinol + NAD(+) + 4 H(+)(out). Functionally, NDH-1 shuttles electrons from NADH, via FMN and iron-sulfur (Fe-S) centers, to quinones in the respiratory chain. The immediate electron acceptor for the enzyme in this species is believed to be a menaquinone. Couples the redox reaction to proton translocation (for every two electrons transferred, four hydrogen ions are translocated across the cytoplasmic membrane), and thus conserves the redox energy in a proton gradient. The sequence is that of NADH-quinone oxidoreductase subunit A from Chlorobium phaeobacteroides (strain DSM 266 / SMG 266 / 2430).